A 327-amino-acid chain; its full sequence is Biotin synthase (327 aa).

A Radical SAM core domain is found at 52–279; it reads TKVQLSTLVS…ASYVRLSAGR (228 aa). Positions 67, 71, and 74 each coordinate [4Fe-4S] cluster. Positions 111, 142, 202, and 274 each coordinate [2Fe-2S] cluster.

The protein belongs to the radical SAM superfamily. Biotin synthase family. In terms of assembly, homodimer. It depends on [4Fe-4S] cluster as a cofactor. [2Fe-2S] cluster serves as cofactor.

It carries out the reaction (4R,5S)-dethiobiotin + (sulfur carrier)-SH + 2 reduced [2Fe-2S]-[ferredoxin] + 2 S-adenosyl-L-methionine = (sulfur carrier)-H + biotin + 2 5'-deoxyadenosine + 2 L-methionine + 2 oxidized [2Fe-2S]-[ferredoxin]. The protein operates within cofactor biosynthesis; biotin biosynthesis; biotin from 7,8-diaminononanoate: step 2/2. In terms of biological role, catalyzes the conversion of dethiobiotin (DTB) to biotin by the insertion of a sulfur atom into dethiobiotin via a radical-based mechanism. This chain is Biotin synthase, found in Chromobacterium violaceum (strain ATCC 12472 / DSM 30191 / JCM 1249 / CCUG 213 / NBRC 12614 / NCIMB 9131 / NCTC 9757 / MK).